The chain runs to 837 residues: Vacuolar membrane protease (837 aa).

At 1–36 (MSEEEVHDTSSEASEVFTNQPNAFVRGVRSIFGYRK) the chain is on the cytoplasmic side. A helical transmembrane segment spans residues 37 to 57 (TSLTLFVILTIVVTAGLSFYD). Topologically, residues 58-355 (NSLELTIELP…FATPISALAR (298 aa)) are vacuolar. Asn143 carries an N-linked (GlcNAc...) asparagine glycan. His157 and Asp169 together coordinate Zn(2+). Glu201 functions as the Proton acceptor in the catalytic mechanism. 3 residues coordinate Zn(2+): Glu202, Glu227, and His299. A helical transmembrane segment spans residues 356 to 376 (VNLVLLVLFPVVSTPLLFVIV). Over 377–384 (KYKKWKLR) the chain is Cytoplasmic. The helical transmembrane segment at 385-405 (VTNFLGVPLAMGLAVAVGQVG) threads the bilayer. Over 406-415 (NPMLVSSHPM) the chain is Vacuolar. A helical membrane pass occupies residues 416–436 (MVVATTTSIVVLVYYVVLNGV). Residues 437–446 (DWVNTSSDQK) are Cytoplasmic-facing. The chain crosses the membrane as a helical span at residues 447-467 (LVTMIEVSFVYWVVLVYVTWS). The Vacuolar portion of the chain corresponds to 468 to 474 (GGDHTGE). A helical transmembrane segment spans residues 475 to 495 (FGVTVLFFVQASTSLLGLIGW). Over 496–539 (TFTRVRGGDEPLLSGEEERYGTEDERDTEKPLVEHNYDWSLQYL) the chain is Cytoplasmic. The chain crosses the membrane as a helical span at residues 540–560 (LIVPVSSLVVYNSGWLVLEGV). Residue Asn561 is glycosylated (N-linked (GlcNAc...) asparagine). Residues 561–572 (NKTVQESLASEH) lie on the Vacuolar side of the membrane. A helical transmembrane segment spans residues 573–593 (LIYWIVVVFSQFLVLPVVPFI). Topologically, residues 594–598 (TKFNR) are cytoplasmic. The helical transmembrane segment at 599-619 (YIVLGLSVVAVVGVLMSMAVH) threads the bilayer. Topologically, residues 620 to 837 (PFNQGSPMKL…LVGVVKHVDV (218 aa)) are vacuolar. The N-linked (GlcNAc...) asparagine glycan is linked to Asn689.

The protein belongs to the peptidase M28 family. The cofactor is Zn(2+).

The protein resides in the vacuole membrane. May be involved in vacuolar sorting and osmoregulation. The polypeptide is Vacuolar membrane protease (Candida albicans (strain WO-1) (Yeast)).